Reading from the N-terminus, the 545-residue chain is Chaperonin GroEL (545 aa).

ATP is bound by residues 30–33, lysine 51, 87–91, glycine 415, 479–481, and aspartate 495; these read TLGP, DGTTT, and NAA.

It belongs to the chaperonin (HSP60) family. Forms a cylinder of 14 subunits composed of two heptameric rings stacked back-to-back. Interacts with the co-chaperonin GroES.

Its subcellular location is the cytoplasm. It catalyses the reaction ATP + H2O + a folded polypeptide = ADP + phosphate + an unfolded polypeptide.. In terms of biological role, together with its co-chaperonin GroES, plays an essential role in assisting protein folding. The GroEL-GroES system forms a nano-cage that allows encapsulation of the non-native substrate proteins and provides a physical environment optimized to promote and accelerate protein folding. This chain is Chaperonin GroEL, found in Tolumonas auensis (strain DSM 9187 / NBRC 110442 / TA 4).